A 514-amino-acid chain; its full sequence is 3-octaprenyl-4-hydroxybenzoate carboxy-lyase (514 aa).

N177 contributes to the Mn(2+) binding site. Residues 180 to 182 (IYR), 194 to 196 (RWL), and 199 to 200 (RG) each bind prenylated FMN. A Mn(2+)-binding site is contributed by E243. Catalysis depends on D314, which acts as the Proton donor.

Belongs to the UbiD family. As to quaternary structure, homohexamer. Requires prenylated FMN as cofactor. Mn(2+) is required as a cofactor.

The protein localises to the cell membrane. It carries out the reaction a 4-hydroxy-3-(all-trans-polyprenyl)benzoate + H(+) = a 2-(all-trans-polyprenyl)phenol + CO2. The protein operates within cofactor biosynthesis; ubiquinone biosynthesis. Catalyzes the decarboxylation of 3-octaprenyl-4-hydroxy benzoate to 2-octaprenylphenol, an intermediate step in ubiquinone biosynthesis. This chain is 3-octaprenyl-4-hydroxybenzoate carboxy-lyase, found in Bordetella pertussis (strain Tohama I / ATCC BAA-589 / NCTC 13251).